The chain runs to 477 residues: Ribulose bisphosphate carboxylase large chain (477 aa).

Positions 1 to 2 (MS) are excised as a propeptide. N-acetylproline is present on proline 3. N6,N6,N6-trimethyllysine is present on lysine 14. Residues asparagine 123 and threonine 173 each coordinate substrate. Catalysis depends on lysine 175, which acts as the Proton acceptor. Residue lysine 177 participates in substrate binding. Lysine 201, aspartate 203, and glutamate 204 together coordinate Mg(2+). Lysine 201 carries the post-translational modification N6-carboxylysine. Histidine 294 serves as the catalytic Proton acceptor. Residues arginine 295, histidine 327, and serine 379 each contribute to the substrate site.

It belongs to the RuBisCO large chain family. Type I subfamily. As to quaternary structure, heterohexadecamer of 8 large chains and 8 small chains; disulfide-linked. The disulfide link is formed within the large subunit homodimers. The cofactor is Mg(2+). In terms of processing, the disulfide bond which can form in the large chain dimeric partners within the hexadecamer appears to be associated with oxidative stress and protein turnover.

The protein localises to the plastid. It localises to the chloroplast. The catalysed reaction is 2 (2R)-3-phosphoglycerate + 2 H(+) = D-ribulose 1,5-bisphosphate + CO2 + H2O. The enzyme catalyses D-ribulose 1,5-bisphosphate + O2 = 2-phosphoglycolate + (2R)-3-phosphoglycerate + 2 H(+). RuBisCO catalyzes two reactions: the carboxylation of D-ribulose 1,5-bisphosphate, the primary event in carbon dioxide fixation, as well as the oxidative fragmentation of the pentose substrate in the photorespiration process. Both reactions occur simultaneously and in competition at the same active site. This Agrostis stolonifera (Creeping bentgrass) protein is Ribulose bisphosphate carboxylase large chain.